The following is a 244-amino-acid chain: U4/U6.U5 tri-snRNP-associated protein 3-like protein C162.01c (244 aa).

Basic and acidic residues-rich tracts occupy residues 1–11 (MSSSRSGEHRR) and 20–116 (ESSR…RRDG). Disordered stretches follow at residues 1 to 192 (MSSS…EDEA) and 223 to 244 (KKTK…LDNE). Residues S121 and S140 each carry the phosphoserine modification. Over residues 126-182 (GLERKREHEKLQAPSPKEEEERPVDQGDKMDGVKEDKDGSLEVGKSHDAMTRTKSAE) the composition is skewed to basic and acidic residues. Positions 183–192 (EEIVEQEDEA) are enriched in acidic residues.

Belongs to the SNUT3 family. As to quaternary structure, part of a tri-snRNP complex.

The protein resides in the nucleus. In terms of biological role, may play a role in mRNA splicing. The chain is U4/U6.U5 tri-snRNP-associated protein 3-like protein C162.01c from Schizosaccharomyces pombe (strain 972 / ATCC 24843) (Fission yeast).